Consider the following 410-residue polypeptide: MFLVLERKMRTHQVFPLPLLLVIASVASENASTSRGCGLDLLPQYVSLCDLDAIWGIVVEAVAGAGALITLLLMLILLVRLPFIKDKERKRPVCLHFLFLLGTLGLFGLTFAFIIQMDETICSIRRFLWGVLFALCFSCLLSQAWRVRRLVRQGTSPASWQLVSLALCLMLVQVIIATEWLVLTVLRDTKPACAYEPMDFVMALIYDMVLLAITLAQSLFTLCGKFKRWKVNGAFILVTTFLSALIWVVWMTMYLFGNSLIKQGDAWSDPTLAITLAASGWVFVIFHAIPEIHYTLLPPLQENPPNYFDTSQPRMRETAFDEEMHLPRAYMENKAFSMDEHNAALRSAVGFSNGSLEQRSSSLGKKPSSLGNRPSAPFRSNVYQPTEMAVVLNGGTIPTAPPSHTGRHHW.

The signal sequence occupies residues 1–28 (MFLVLERKMRTHQVFPLPLLLVIASVAS). The Extracellular portion of the chain corresponds to 29–56 (ENASTSRGCGLDLLPQYVSLCDLDAIWG). N-linked (GlcNAc...) asparagine glycosylation occurs at Asn30. Residues 57 to 77 (IVVEAVAGAGALITLLLMLIL) traverse the membrane as a helical segment. The Cytoplasmic segment spans residues 78–94 (LVRLPFIKDKERKRPVC). The chain crosses the membrane as a helical span at residues 95–115 (LHFLFLLGTLGLFGLTFAFII). Residues 116-126 (QMDETICSIRR) are Extracellular-facing. Residues 127 to 147 (FLWGVLFALCFSCLLSQAWRV) form a helical membrane-spanning segment. Residues 148 to 164 (RRLVRQGTSPASWQLVS) are Cytoplasmic-facing. A helical membrane pass occupies residues 165-185 (LALCLMLVQVIIATEWLVLTV). Residues 186–199 (LRDTKPACAYEPMD) lie on the Extracellular side of the membrane. The chain crosses the membrane as a helical span at residues 200–220 (FVMALIYDMVLLAITLAQSLF). Over 221-234 (TLCGKFKRWKVNGA) the chain is Cytoplasmic. Residues 235 to 255 (FILVTTFLSALIWVVWMTMYL) traverse the membrane as a helical segment. At 256–271 (FGNSLIKQGDAWSDPT) the chain is on the extracellular side. A helical membrane pass occupies residues 272–292 (LAITLAASGWVFVIFHAIPEI). The Cytoplasmic segment spans residues 293–410 (HYTLLPPLQE…PPSHTGRHHW (118 aa)). Phosphoserine is present on Ser355. The tract at residues 356-381 (LEQRSSSLGKKPSSLGNRPSAPFRSN) is disordered. Positions 360-371 (SSSLGKKPSSLG) are enriched in low complexity.

The protein belongs to the G-protein coupled receptor 3 family.

The protein resides in the cell membrane. It is found in the cytoplasmic vesicle membrane. Functionally, G-protein coupled receptor involved in the regulation of cell volume. The chain is G-protein coupled receptor family C group 5 member B (Gprc5b) from Mus musculus (Mouse).